The primary structure comprises 259 residues: Gem-associated protein 2 (259 aa).

The protein belongs to the gemin-2 family. Forms a stable heteromeric complex with survival of motor neuron protein (SMN), GEMIN3 and GEMIN4. The SMN complex is associated with the spliceosomal snRNAs U1 and U5 in the cytoplasm of oocytes.

Its subcellular location is the nucleus. It is found in the gem. The protein localises to the cytoplasm. The SMN complex catalyzes the assembly of small nuclear ribonucleoproteins (snRNPs), the building blocks of the spliceosome, and thereby plays an important role in the splicing of cellular pre-mRNAs. Most spliceosomal snRNPs contain a common set of Sm proteins SNRPB, SNRPD1, SNRPD2, SNRPD3, SNRPE, SNRPF and SNRPG that assemble in a heptameric protein ring on the Sm site of the small nuclear RNA to form the core snRNP (Sm core). In the cytosol, the Sm proteins SNRPD1, SNRPD2, SNRPE, SNRPF and SNRPG (5Sm) are trapped in an inactive 6S pICln-Sm complex by the chaperone CLNS1A that controls the assembly of the core snRNP. To assemble core snRNPs, the SMN complex accepts the trapped 5Sm proteins from CLNS1A. Binding of snRNA inside 5Sm ultimately triggers eviction of the SMN complex, thereby allowing binding of SNRPD3 and SNRPB to complete assembly of the core snRNP. Within the SMN complex, GEMIN2 constrains the conformation of 5Sm, thereby promoting 5Sm binding to snRNA containing the snRNP code (a nonameric Sm site and a 3'-adjacent stem-loop), thus preventing progression of assembly until a cognate substrate is bound. This Xenopus laevis (African clawed frog) protein is Gem-associated protein 2 (gemin2).